The sequence spans 246 residues: Uridylate kinase (246 aa).

An ATP-binding site is contributed by Lys-11–Gly-14. Residue Gly-53 participates in UMP binding. Gly-54 and Arg-58 together coordinate ATP. UMP contacts are provided by residues Asp-73 and Thr-134–Thr-141. Residues Thr-161, Tyr-167, and Asp-170 each coordinate ATP.

This sequence belongs to the UMP kinase family. In terms of assembly, homohexamer.

The protein localises to the cytoplasm. The enzyme catalyses UMP + ATP = UDP + ADP. Its pathway is pyrimidine metabolism; CTP biosynthesis via de novo pathway; UDP from UMP (UMPK route): step 1/1. Its activity is regulated as follows. Inhibited by UTP. Its function is as follows. Catalyzes the reversible phosphorylation of UMP to UDP. In Leptospira borgpetersenii serovar Hardjo-bovis (strain JB197), this protein is Uridylate kinase.